The following is a 255-amino-acid chain: Hydroxyacylglutathione hydrolase (255 aa).

Zn(2+)-binding residues include histidine 56, histidine 58, aspartate 60, histidine 61, histidine 114, aspartate 133, and histidine 171.

It belongs to the metallo-beta-lactamase superfamily. Glyoxalase II family. Monomer. Requires Zn(2+) as cofactor.

It carries out the reaction an S-(2-hydroxyacyl)glutathione + H2O = a 2-hydroxy carboxylate + glutathione + H(+). It functions in the pathway secondary metabolite metabolism; methylglyoxal degradation; (R)-lactate from methylglyoxal: step 2/2. Its function is as follows. Thiolesterase that catalyzes the hydrolysis of S-D-lactoyl-glutathione to form glutathione and D-lactic acid. In Ruegeria pomeroyi (strain ATCC 700808 / DSM 15171 / DSS-3) (Silicibacter pomeroyi), this protein is Hydroxyacylglutathione hydrolase.